An 877-amino-acid polypeptide reads, in one-letter code: Leucine--tRNA ligase (877 aa).

The short motif at 48-58 (PYPSGKLHMGH) is the 'HIGH' region element. The 'KMSKS' region motif lies at 636–640 (KMSKS). ATP is bound at residue Lys-639.

This sequence belongs to the class-I aminoacyl-tRNA synthetase family.

It localises to the cytoplasm. It catalyses the reaction tRNA(Leu) + L-leucine + ATP = L-leucyl-tRNA(Leu) + AMP + diphosphate. The sequence is that of Leucine--tRNA ligase from Ralstonia nicotianae (strain ATCC BAA-1114 / GMI1000) (Ralstonia solanacearum).